Reading from the N-terminus, the 83-residue chain is Small ribosomal subunit protein eS21 (83 aa).

Belongs to the eukaryotic ribosomal protein eS21 family. In terms of assembly, component of the 40S small ribosomal subunit.

Its subcellular location is the cytoplasm. It is found in the cytosol. It localises to the rough endoplasmic reticulum. Component of the small ribosomal subunit. The ribosome is a large ribonucleoprotein complex responsible for the synthesis of proteins in the cell. This Ictalurus punctatus (Channel catfish) protein is Small ribosomal subunit protein eS21 (rps21).